Here is an 873-residue protein sequence, read N- to C-terminus: E3 ubiquitin-protein ligase UPL5 (873 aa).

The segment covering 1–19 has biased composition (polar residues); the sequence is MTLSRSSADDSTNNANRSY. Disordered regions lie at residues 1–37 and 70–90; these read MTLS…DSSD and RSGE…SNRP. The Ubiquitin-like domain occupies 95-171; sequence LQIFVRMMSG…LQLVARMQST (77 aa). The C-type lectin domain occupies 272–296; the sequence is CLPIVLEFCKLLRKVCPDQKLYVTC. The region spanning 532–873 is the HECT domain; that stretch reads SPEALHGGLF…DHVSSSFGKW (342 aa). The Glycyl thioester intermediate role is filled by Cys-839.

This sequence belongs to the UPL family. In terms of assembly, interacts with WRKY53.

It is found in the cytoplasm. The catalysed reaction is S-ubiquitinyl-[E2 ubiquitin-conjugating enzyme]-L-cysteine + [acceptor protein]-L-lysine = [E2 ubiquitin-conjugating enzyme]-L-cysteine + N(6)-ubiquitinyl-[acceptor protein]-L-lysine.. Its pathway is protein modification; protein ubiquitination. Its function is as follows. E3 ubiquitin protein ligase that regulates leaf senescence through ubiquitination and subsequent degradation of WRKY53. This Arabidopsis thaliana (Mouse-ear cress) protein is E3 ubiquitin-protein ligase UPL5 (UPL5).